A 352-amino-acid polypeptide reads, in one-letter code: Ion-translocating oxidoreductase complex subunit D (352 aa).

The next 4 helical transmembrane spans lie at 20–40 (IMLLVVIAALPGIAAQTWFFG), 42–62 (GTLFQIVLAAITALVAEAIVL), 69–91 (VASHLQDYSALLTGLLLAVSIPP), and 123–143 (PAMIGYVVLLISFPVQMTSWL). Position 187 is an FMN phosphoryl threonine (T187). 5 helical membrane-spanning segments follow: residues 215 to 235 (LAGVGWQWVNLAWLVGGVFLL), 242 to 262 (WHIPVSFLLTLALCAALGWLF), 267 to 287 (LASPQLHLLSGATMLGAFFIL), 301 to 321 (LIFGALAGVLVWLIRSFGGYP), and 322 to 342 (DGVAFAVLLANITVPLIDYYT).

The protein belongs to the NqrB/RnfD family. As to quaternary structure, the complex is composed of six subunits: RsxA, RsxB, RsxC, RsxD, RsxE and RsxG. FMN serves as cofactor.

It is found in the cell inner membrane. Part of a membrane-bound complex that couples electron transfer with translocation of ions across the membrane. Required to maintain the reduced state of SoxR. This chain is Ion-translocating oxidoreductase complex subunit D, found in Salmonella dublin (strain CT_02021853).